We begin with the raw amino-acid sequence, 363 residues long: Forkhead box protein I1 (363 aa).

Residues 1 to 18 show a composition bias toward low complexity; sequence MNPVQQPAQQRSPASSLP. Disordered stretches follow at residues 1–24, 210–269, and 344–363; these read MNPV…KRAQ, DNGN…SPPA, and TTAQ…QGRY. The segment at residues 125 to 219 is a DNA-binding region (fork-head); that stretch reads RPPYSYSALI…DNGNFRRKRK (95 aa). A compositionally biased stretch (basic and acidic residues) spans 231–243; sequence KIGEDHLNPKGKE. Composition is skewed to low complexity over residues 244–258 and 347–363; these read SPPM…EPSP and QKQP…QGRY.

The protein resides in the nucleus. Transcription factor. Essential for ventral specification of the early cephalic (head) ectoderm during gastrulation, playing a role in the 'non-neural' versus 'neural' cell fate choice. Binds to DNA via the target sequence 5'-[AG]TAAA[CT]A-3', with 5'-ATAAACA-3' being the preferred binding site. This is Forkhead box protein I1 from Xenopus tropicalis (Western clawed frog).